Reading from the N-terminus, the 268-residue chain is Interleukin-2 receptor subunit alpha (268 aa).

A signal peptide spans 1 to 21; the sequence is MEPRLLMLGFLSLTIVPSCRA. A Sushi 1 domain is found at 22–79; the sequence is ELCLYDPPEVPNATFKALSYKNGTILNCECKRGFRRLKELVYMRCLGNSWSSNCQCTS. At 22 to 236 the chain is on the extracellular side; that stretch reads ELCLYDPPEV…ETFVLTMEYK (215 aa). 3 disulfides stabilise this stretch: Cys24–Cys66, Cys49–Cys75, and Cys51–Cys77. Asn33 and Asn43 each carry an N-linked (GlcNAc...) asparagine glycan. The interval 86-109 is disordered; it reads RKQVTAQLEHQKEQQTTTDMQKPT. Over residues 88-109 the composition is skewed to polar residues; the sequence is QVTAQLEHQKEQQTTTDMQKPT. Residue Asn116 is glycosylated (N-linked (GlcNAc...) asparagine). Positions 119–182 constitute a Sushi 2 domain; sequence GHCREPPPWK…WTQPQLTCVD (64 aa). Intrachain disulfides connect Cys121–Cys164 and Cys148–Cys180. Residues 189 to 219 are disordered; that stretch reads FLASEESQGSRNSSPESETSCPITTTDFPQP. The span at 193–211 shows a compositional bias: polar residues; sequence EESQGSRNSSPESETSCPI. Residues 237-257 traverse the membrane as a helical segment; sequence VAVASCLFLLISILLLSGLTW. The Cytoplasmic portion of the chain corresponds to 258 to 268; that stretch reads QHRWRKSRRTI.

As to quaternary structure, non-covalent dimer of an alpha and a beta subunit. IL2R exists in 3 different forms: a high affinity dimer, an intermediate affinity monomer (beta subunit), and a low affinity monomer (alpha subunit). The high and intermediate affinity forms also associate with a gamma subunit.

The protein localises to the membrane. Receptor for interleukin-2. The receptor is involved in the regulation of immune tolerance by controlling regulatory T cells (TREGs) activity. TREGs suppress the activation and expansion of autoreactive T-cells. The chain is Interleukin-2 receptor subunit alpha (Il2ra) from Mus musculus (Mouse).